The sequence spans 142 residues: Large ribosomal subunit protein uL11 (142 aa).

The protein belongs to the universal ribosomal protein uL11 family. As to quaternary structure, part of the ribosomal stalk of the 50S ribosomal subunit. Interacts with L10 and the large rRNA to form the base of the stalk. L10 forms an elongated spine to which L12 dimers bind in a sequential fashion forming a multimeric L10(L12)X complex. One or more lysine residues are methylated.

Functionally, forms part of the ribosomal stalk which helps the ribosome interact with GTP-bound translation factors. The chain is Large ribosomal subunit protein uL11 from Rhizobium meliloti (strain 1021) (Ensifer meliloti).